Here is a 686-residue protein sequence, read N- to C-terminus: Phosphomethylpyrimidine synthase (686 aa).

Substrate-binding positions include Asn235, Met264, Tyr293, His329, 349–351 (SRG), 390–393 (DGMR), and Glu429. His433 is a binding site for Zn(2+). Tyr456 is a substrate binding site. Residue His497 coordinates Zn(2+). Residues Cys577, Cys580, and Cys585 each contribute to the [4Fe-4S] cluster site. Positions 659-686 (IDSSGINDNKNDQQDASVVRVPSLEIEG) are disordered.

This sequence belongs to the ThiC family. Homodimer. [4Fe-4S] cluster is required as a cofactor.

It catalyses the reaction 5-amino-1-(5-phospho-beta-D-ribosyl)imidazole + S-adenosyl-L-methionine = 4-amino-2-methyl-5-(phosphooxymethyl)pyrimidine + CO + 5'-deoxyadenosine + formate + L-methionine + 3 H(+). Its pathway is cofactor biosynthesis; thiamine diphosphate biosynthesis. Its function is as follows. Catalyzes the synthesis of the hydroxymethylpyrimidine phosphate (HMP-P) moiety of thiamine from aminoimidazole ribotide (AIR) in a radical S-adenosyl-L-methionine (SAM)-dependent reaction. The protein is Phosphomethylpyrimidine synthase of Shewanella denitrificans (strain OS217 / ATCC BAA-1090 / DSM 15013).